We begin with the raw amino-acid sequence, 92 residues long: Toxin RelE3 (92 aa).

This sequence belongs to the RelE toxin family.

Toxic component of a type II toxin-antitoxin (TA) system. Its toxic effect is neutralized by coexpression with cognate antitoxin RelB3 but no other ParD or RelB antitoxin. This Caulobacter vibrioides (strain ATCC 19089 / CIP 103742 / CB 15) (Caulobacter crescentus) protein is Toxin RelE3 (relE3).